A 485-amino-acid polypeptide reads, in one-letter code: Glucagon receptor (485 aa).

The N-terminal stretch at Met-1 to Ser-26 is a signal peptide. The Extracellular segment spans residues Ala-27–Lys-137. Disulfide bonds link Cys-44/Cys-68, Cys-59/Cys-101, and Cys-82/Cys-122. N-linked (GlcNAc...) asparagine glycans are attached at residues Asn-47, Asn-60, Asn-75, Asn-79, and Asn-118. Residues Met-138–Val-162 form a helical membrane-spanning segment. Residues Ile-163 to Arg-174 are Cytoplasmic-facing. Residues Asn-175 to Leu-199 form a helical membrane-spanning segment. The Extracellular portion of the chain corresponds to Lys-200–Arg-226. An intrachain disulfide couples Cys-225 to Cys-295. A helical membrane pass occupies residues Val-227–Leu-250. Topologically, residues Tyr-251–Phe-264 are cytoplasmic. A helical membrane pass occupies residues Phe-265–Val-286. The Extracellular segment spans residues Lys-287 to Phe-304. The helical transmembrane segment at Trp-305–Ile-327 threads the bilayer. The Cytoplasmic segment spans residues His-328–Ser-351. Residues Ser-351–Thr-354 form an important for allosteric inhibitor binding region. A helical membrane pass occupies residues Thr-352–Thr-370. Residues Asp-371–Lys-382 lie on the Extracellular side of the membrane. A helical membrane pass occupies residues Leu-383–Phe-403. The Cytoplasmic portion of the chain corresponds to Leu-404–Thr-485. Over residues Ala-457 to Ser-475 the composition is skewed to polar residues. The interval Ala-457 to Thr-485 is disordered. 2 positions are modified to phosphoserine: Ser-460 and Ser-476.

The protein belongs to the G-protein coupled receptor 2 family. Ligand-binding promotes phosphorylation of serine residues in the C-terminal cytoplasmic domain. Phosphorylation is important for receptor endocytosis after ligand-binding. In terms of tissue distribution, expressed predominantly in liver, kidney, adrenal, lung and stomach, while lower levels of expression are detected in brown and white adipose tissue, cerebellum, duodenum and heart.

It localises to the cell membrane. Functionally, G-protein coupled receptor for glucagon that plays a central role in the regulation of blood glucose levels and glucose homeostasis. Regulates the rate of hepatic glucose production by promoting glycogen hydrolysis and gluconeogenesis. Plays an important role in mediating the responses to fasting. Ligand binding causes a conformation change that triggers signaling via guanine nucleotide-binding proteins (G proteins) and modulates the activity of down-stream effectors, such as adenylate cyclase. Promotes activation of adenylate cyclase. Besides, plays a role in signaling via a phosphatidylinositol-calcium second messenger system. This chain is Glucagon receptor (Gcgr), found in Mus musculus (Mouse).